The primary structure comprises 215 residues: Small ribosomal subunit protein uS2 (215 aa).

It belongs to the universal ribosomal protein uS2 family.

The sequence is that of Small ribosomal subunit protein uS2 from Caldivirga maquilingensis (strain ATCC 700844 / DSM 13496 / JCM 10307 / IC-167).